The following is a 400-amino-acid chain: Queuine tRNA-ribosyltransferase (400 aa).

The Proton acceptor role is filled by Asp93. Residues 93-97 (DSGGF), Asp147, Gln190, and Gly217 contribute to the substrate site. Residues 248-254 (GVGSPED) are RNA binding. Asp267 functions as the Nucleophile in the catalytic mechanism. The RNA binding; important for wobble base 34 recognition stretch occupies residues 272-276 (TRIAR). 4 residues coordinate Zn(2+): Cys305, Cys307, Cys310, and His336. The segment at 375-400 (RRERARAAGGAGHAPGPAEPLLPENR) is disordered. A compositionally biased stretch (low complexity) spans 388 to 400 (APGPAEPLLPENR).

The protein belongs to the queuine tRNA-ribosyltransferase family. As to quaternary structure, homodimer. Within each dimer, one monomer is responsible for RNA recognition and catalysis, while the other monomer binds to the replacement base PreQ1. Zn(2+) serves as cofactor.

The enzyme catalyses 7-aminomethyl-7-carbaguanine + guanosine(34) in tRNA = 7-aminomethyl-7-carbaguanosine(34) in tRNA + guanine. Its pathway is tRNA modification; tRNA-queuosine biosynthesis. Its function is as follows. Catalyzes the base-exchange of a guanine (G) residue with the queuine precursor 7-aminomethyl-7-deazaguanine (PreQ1) at position 34 (anticodon wobble position) in tRNAs with GU(N) anticodons (tRNA-Asp, -Asn, -His and -Tyr). Catalysis occurs through a double-displacement mechanism. The nucleophile active site attacks the C1' of nucleotide 34 to detach the guanine base from the RNA, forming a covalent enzyme-RNA intermediate. The proton acceptor active site deprotonates the incoming PreQ1, allowing a nucleophilic attack on the C1' of the ribose to form the product. After dissociation, two additional enzymatic reactions on the tRNA convert PreQ1 to queuine (Q), resulting in the hypermodified nucleoside queuosine (7-(((4,5-cis-dihydroxy-2-cyclopenten-1-yl)amino)methyl)-7-deazaguanosine). This chain is Queuine tRNA-ribosyltransferase, found in Symbiobacterium thermophilum (strain DSM 24528 / JCM 14929 / IAM 14863 / T).